The primary structure comprises 115 residues: Cholecystokinin (115 aa).

The signal sequence occupies residues 1-20 (MKCGVCLCVVMAVLAAGALA). 2 consecutive propeptides follow at residues 21–45 (QPVVPVEAVDPMEQRAEEAPRRQLR) and 47–63 (VLRPDSEPRARLGALLA). At tyrosine 97 the chain carries Sulfotyrosine. Phenylalanine 103 is subject to Phenylalanine amide. Positions 107–115 (SAEDYEYPS) are excised as a propeptide. A sulfotyrosine mark is found at tyrosine 111 and tyrosine 113.

This sequence belongs to the gastrin/cholecystokinin family. In terms of assembly, binds to CCK-A receptors in the pancreas and CCK-B receptors in the brain. In terms of processing, the precursor is cleaved by proteases to produce a number of active cholecystokinins. Sulfation of Tyr-97 is essential for receptor activation. The shortest form (CCK8) is predominantly found in the brain, whereas the larger ones are found in the intestine.

It is found in the secreted. Functionally, this peptide hormone induces gall bladder contraction and the release of pancreatic enzymes in the gut. Its function in the brain is not clear. Binding to CCK-A receptors stimulates amylase release from the pancreas, binding to CCK-B receptors stimulates gastric acid secretion. The sequence is that of Cholecystokinin (Cck) from Rattus norvegicus (Rat).